We begin with the raw amino-acid sequence, 445 residues long: 3-phosphoshikimate 1-carboxyvinyltransferase (445 aa).

Residues 1 to 25 are disordered; it reads MTDSNQPTPLQARKSGALHGTARVP. Positions 28, 29, and 33 each coordinate 3-phosphoshikimate. K28 is a binding site for phosphoenolpyruvate. 2 residues coordinate phosphoenolpyruvate: G101 and R129. Positions 175, 177, 328, and 355 each coordinate 3-phosphoshikimate. Q177 contacts phosphoenolpyruvate. The Proton acceptor role is filled by D328. The phosphoenolpyruvate site is built by R359 and R402.

Belongs to the EPSP synthase family. As to quaternary structure, monomer.

The protein localises to the cytoplasm. It catalyses the reaction 3-phosphoshikimate + phosphoenolpyruvate = 5-O-(1-carboxyvinyl)-3-phosphoshikimate + phosphate. It functions in the pathway metabolic intermediate biosynthesis; chorismate biosynthesis; chorismate from D-erythrose 4-phosphate and phosphoenolpyruvate: step 6/7. Functionally, catalyzes the transfer of the enolpyruvyl moiety of phosphoenolpyruvate (PEP) to the 5-hydroxyl of shikimate-3-phosphate (S3P) to produce enolpyruvyl shikimate-3-phosphate and inorganic phosphate. The protein is 3-phosphoshikimate 1-carboxyvinyltransferase of Rhodopseudomonas palustris (strain TIE-1).